A 173-amino-acid chain; its full sequence is MSLKLAEKEQVVATLQTRLTRAQATVVAEYRGLTVAQMTVFRAEAQKQSVHVQVVKNTLLKRALAGTPFAVMDHLLKGPLVFAAAEDPVALAKLFTDHAKRLEKLVIIGGVLSGKQIDAAAIAQLSKMPSREELLAKLLGTMQAPVAGFVRTLNEVPSRFVRTLAAVRDQRAA.

The protein belongs to the universal ribosomal protein uL10 family. In terms of assembly, part of the ribosomal stalk of the 50S ribosomal subunit. The N-terminus interacts with L11 and the large rRNA to form the base of the stalk. The C-terminus forms an elongated spine to which L12 dimers bind in a sequential fashion forming a multimeric L10(L12)X complex.

Forms part of the ribosomal stalk, playing a central role in the interaction of the ribosome with GTP-bound translation factors. This is Large ribosomal subunit protein uL10 from Acidithiobacillus ferrooxidans (strain ATCC 23270 / DSM 14882 / CIP 104768 / NCIMB 8455) (Ferrobacillus ferrooxidans (strain ATCC 23270)).